A 119-amino-acid polypeptide reads, in one-letter code: Large ribosomal subunit protein bL20 (119 aa).

Belongs to the bacterial ribosomal protein bL20 family.

Functionally, binds directly to 23S ribosomal RNA and is necessary for the in vitro assembly process of the 50S ribosomal subunit. It is not involved in the protein synthesizing functions of that subunit. In Treponema denticola (strain ATCC 35405 / DSM 14222 / CIP 103919 / JCM 8153 / KCTC 15104), this protein is Large ribosomal subunit protein bL20.